The primary structure comprises 301 residues: Homoserine O-acetyltransferase (301 aa).

The Acyl-thioester intermediate role is filled by C142. Substrate-binding residues include K163 and S192. The active-site Proton acceptor is the H235. Residue E237 is part of the active site. Residue R249 coordinates substrate.

This sequence belongs to the MetA family.

It is found in the cytoplasm. It carries out the reaction L-homoserine + acetyl-CoA = O-acetyl-L-homoserine + CoA. It functions in the pathway amino-acid biosynthesis; L-methionine biosynthesis via de novo pathway; O-acetyl-L-homoserine from L-homoserine: step 1/1. In terms of biological role, transfers an acetyl group from acetyl-CoA to L-homoserine, forming acetyl-L-homoserine. This Bacillus thuringiensis subsp. konkukian (strain 97-27) protein is Homoserine O-acetyltransferase.